Reading from the N-terminus, the 301-residue chain is Phosphatidylglycerol--prolipoprotein diacylglyceryl transferase (301 aa).

Transmembrane regions (helical) follow at residues 10-30 (IAFS…LASF), 57-77 (LLFY…MLFY), 92-112 (VWEG…AVAW), and 119-139 (LQMF…LGFG). Arg-140 is a binding site for a 1,2-diacyl-sn-glycero-3-phospho-(1'-sn-glycerol). 3 consecutive transmembrane segments (helical) span residues 202 to 222 (PSQL…LWLF), 230 to 250 (YAVS…VEFV), and 264 to 284 (LTRG…LFWL).

Belongs to the Lgt family.

The protein localises to the cell inner membrane. The enzyme catalyses L-cysteinyl-[prolipoprotein] + a 1,2-diacyl-sn-glycero-3-phospho-(1'-sn-glycerol) = an S-1,2-diacyl-sn-glyceryl-L-cysteinyl-[prolipoprotein] + sn-glycerol 1-phosphate + H(+). It functions in the pathway protein modification; lipoprotein biosynthesis (diacylglyceryl transfer). In terms of biological role, catalyzes the transfer of the diacylglyceryl group from phosphatidylglycerol to the sulfhydryl group of the N-terminal cysteine of a prolipoprotein, the first step in the formation of mature lipoproteins. The chain is Phosphatidylglycerol--prolipoprotein diacylglyceryl transferase from Xylella fastidiosa (strain 9a5c).